The sequence spans 498 residues: MLMLHAVPVGICLLLWYVVYGTKRKECIPTIRRWPRLLPQFLDRLSYNDHAARLVKHGYEKHKNQPFRLLKMDMDLIVIPLQYALELRAVTSDKLDPLTASFDDNAGKVTRILLGSELHTRAIQQRLTPKLPQTLPVLLDELNHAFGQVLPAGNDGSNAWISVNPYELVLNLATRATARLFVGDLICRNEIFLETTASFSRNTFDTISTSRSFGNLFTHYFARWISTAKEAHGQLQYIQNLLGSEVQRRKLNSEEKHDDFLQWCTELAVTEDEARPEALAHRTLGILSMAVIHTTAMALTHILFDMISDDSLKESLRREQQNVLKHGWTEITQQTMLDMKQLDSLMRESQRINPVGEFTFRRIVRERITLSDGYQLQPGQQIAIPAKCINTDSTKLSDAHLFQPFRWLKQSGTATTSFSNSSALNLHFGFGRYACPGRFIASYMIKAIMSRILLEYDFKLDSEFPSRRPPNIVHGDKILPNRNAVVLLRRLEKTVTVC.

The first 21 residues, 1-21 (MLMLHAVPVGICLLLWYVVYG), serve as a signal peptide directing secretion. N420 carries N-linked (GlcNAc...) asparagine glycosylation. A heme-binding site is contributed by C435.

It belongs to the cytochrome P450 family. The cofactor is heme.

Its pathway is secondary metabolite biosynthesis. Its function is as follows. Cytochrome P450 monooxygenase; part of the gene clusters that mediates the biosynthesis of lolitrems, indole-diterpene mycotoxins that are potent tremorgens in mammals, and are synthesized by clavicipitaceous fungal endophytes in association with their grass hosts. The geranylgeranyl diphosphate (GGPP) synthase ltmG is proposed to catalyze the first step in lolitrem biosynthesis. LtmG catalyzes a series of iterative condensations of isopentenyl diphosphate (IPP) with dimethylallyl diphosphate (DMAPP), geranyl diphosphate (GPP), and farnesyl diphosphate (FPP), to form GGPP. GGPP then condenses with indole-3-glycerol phosphate to form 3-geranylgeranylindole, an acyclic intermediate, to be incorporated into paxilline. Either ltmG or ltmC could be responsible for this step, as both are putative prenyl transferases. The FAD-dependent monooxygenase ltmM then catalyzes the epoxidation of the two terminal alkenes of the geranylgeranyl moiety, which is subsequently cyclized by ltmB, to paspaline. The cytochrome P450 monooxygenases ltmQ and ltmP can sequentially oxidize paspaline to terpendole E and terpendole F. Alternatively, ltmP converts paspaline to an intermediate which is oxidized by ltmQ to terpendole F. LtmF, ltmK, ltmE and ltmJ appear to be unique to the epichloe endophytes. The prenyltransferase ltmF is involved in the 27-hydroxyl-O-prenylation. The cytochrome P450 monooxygenase ltmK is required for the oxidative acetal ring formation. The multi-functional prenyltransferase ltmE is required for C20- and C21-prenylations of the indole ring of paspalanes and acts together with the cytochrome P450 monooxygenase ltmJ to yield lolitremanes by multiple oxidations and ring closures. The stereoisomer pairs of lolitriol and lolitrem N or lolitrem B and lolitrem F may be attributed to variations in the way in which ring closure can occur under the action of ltmJ. While the major product of this pathway is lolitrem B, the prenyl transferases and cytochrome P450 monooxygenases identified in this pathway have a remarkable versatility in their regio- and stereo-specificities to generate a diverse range of metabolites that are products of a metabolic grid rather than a linear pathway. This chain is Cytochrome P450 monooxygenase ltmP, found in Epichloe festucae var. lolii (Neotyphodium lolii).